Reading from the N-terminus, the 376-residue chain is Response regulator aspartate phosphatase H (376 aa).

TPR repeat units follow at residues 99–132 (YYSL…LPFV), 139–172 (AEFH…YQNH), 180–213 (IQSL…AMDI), 220–253 (AISL…SREK), 259–292 (PKVL…ITAR), and 334–367 (EACA…QEDI).

The protein belongs to the Rap family. Homodimer. Interacts with phosphorylated Spo0F. Each RapH protomer is bound to a monomer of Spo0F, forming a heterotetrameric complex. May also interact with non-phosphorylated Spo0F to inhibit the sporulation phosphorelay. Interacts with the C-terminal DNA-binding region of ComA. Does not interact with DegU.

It localises to the cytoplasm. With respect to regulation, both activities are inhibited by RapH. In terms of biological role, dual specificity regulatory protein that can control both sporulation and competence by acting on two distinct response regulators: Spo0F and ComA, respectively. Is involved in the temporal separation of competence and sporulation. Acts as a phosphatase that specifically dephosphorylates the sporulation initiation phosphotransferase Spo0F and inhibits its activity. RapH can also antagonize sporulation by sterically blocking phosphoryl transfer to and from Spo0F. In addition, inhibits the activity of ComA, a transcriptional factor that regulates the development of genetic competence. Acts by binding to ComA, leading to the inhibition of its DNA-binding activity. The sequence is that of Response regulator aspartate phosphatase H (rapH) from Bacillus subtilis (strain 168).